Here is a 215-residue protein sequence, read N- to C-terminus: Adenylate kinase (215 aa).

Position 10–15 (10–15 (GAGKGT)) interacts with ATP. Residues 30–59 (STGDMLRSAIKSGSELGKKAKQVMDAGQLV) form an NMP region. AMP is bound by residues Thr-31, Arg-36, 57–59 (QLV), 85–88 (GFPR), and Gln-92. Residues 122–159 (GRRVHPGSGRVYHVEHNPPKVEGKDDETGEDLVVRPDD) form an LID region. ATP-binding positions include Arg-123 and 132-133 (VY). The tract at residues 128–151 (GSGRVYHVEHNPPKVEGKDDETGE) is disordered. Residues 133-144 (YHVEHNPPKVEG) show a composition bias toward basic and acidic residues. The AMP site is built by Arg-156 and Arg-167. The disordered stretch occupies residues 195–215 (KIDGTQPVERVSEQLGDLLRK). Gln-200 is an ATP binding site.

Belongs to the adenylate kinase family. As to quaternary structure, monomer.

It localises to the cytoplasm. The catalysed reaction is AMP + ATP = 2 ADP. It participates in purine metabolism; AMP biosynthesis via salvage pathway; AMP from ADP: step 1/1. Functionally, catalyzes the reversible transfer of the terminal phosphate group between ATP and AMP. Plays an important role in cellular energy homeostasis and in adenine nucleotide metabolism. This chain is Adenylate kinase, found in Idiomarina loihiensis (strain ATCC BAA-735 / DSM 15497 / L2-TR).